Here is a 344-residue protein sequence, read N- to C-terminus: Trace amine-associated receptor 8b (344 aa).

At 1–31 (MTSNFSQPALQLCYENTNGSCIKTPYSPGPR) the chain is on the extracellular side. Residues N4 and N18 are each glycosylated (N-linked (GlcNAc...) asparagine). 2 cysteine pairs are disulfide-bonded: C21–C185 and C104–C189. The chain crosses the membrane as a helical span at residues 32–52 (VILYMVFGFGAVLAVCGNLLV). At 53 to 67 (VISVLHFKQLHSPAN) the chain is on the cytoplasmic side. The chain crosses the membrane as a helical span at residues 68–88 (FLIASLASADFLVGISVMPFS). Topologically, residues 89–111 (MVRSIESCWYFGDAFCSLHSCCD) are extracellular. The helical transmembrane segment at 112–132 (VAFCYSSALHLCFISVDRYIA) threads the bilayer. At 133–146 (VTDPLVYPTKFTVS) the chain is on the cytoplasmic side. A helical transmembrane segment spans residues 147 to 167 (VSGICISISWILPLVYSSAVF). At 168-195 (YTGISAKGIESLVSALNCVGGCQIVVNQ) the chain is on the extracellular side. The chain crosses the membrane as a helical span at residues 196 to 216 (DWVLIDFLLFFIPTLVMIILY). Residues 217–260 (SKIFLVAKQQAVKIETSVSDNRGESSSESHKARVAKRERKAAKT) lie on the Cytoplasmic side of the membrane. The helical transmembrane segment at 261 to 281 (LGVTVVAFMVSWLPYTIDSLV) threads the bilayer. A topological domain (extracellular) is located at residue D282. The helical transmembrane segment at 283 to 303 (AFVGFITPAYVYEICCWSAYY) threads the bilayer. Residues 304 to 344 (NSAMNPLIYAFFYPWFRKAIKLILSGEILKSHSSTMSLFSE) lie on the Cytoplasmic side of the membrane.

The protein belongs to the G-protein coupled receptor 1 family. In terms of tissue distribution, specifically expressed in neurons of the olfactory epithelium.

It localises to the cell membrane. In terms of biological role, olfactory receptor specific for trace amines. Trace amine compounds are enriched in animal body fluids and act on trace amine-associated receptors (TAARs) to elicit both intraspecific and interspecific innate behaviors. Ligand-binding causes a conformation change that triggers signaling via G alpha proteins, possibly G(i)/G(o) G alpha proteins. This chain is Trace amine-associated receptor 8b, found in Mus musculus (Mouse).